The primary structure comprises 223 residues: DNA mismatch repair protein MutH (223 aa).

Belongs to the MutH family.

The protein localises to the cytoplasm. In terms of biological role, sequence-specific endonuclease that cleaves unmethylated GATC sequences. It is involved in DNA mismatch repair. This Haemophilus influenzae (strain ATCC 51907 / DSM 11121 / KW20 / Rd) protein is DNA mismatch repair protein MutH.